We begin with the raw amino-acid sequence, 191 residues long: dTTP/UTP pyrophosphatase (191 aa).

Residue Asp-64 is the Proton acceptor of the active site.

The protein belongs to the Maf family. YhdE subfamily. The cofactor is a divalent metal cation.

The protein localises to the cytoplasm. The enzyme catalyses dTTP + H2O = dTMP + diphosphate + H(+). The catalysed reaction is UTP + H2O = UMP + diphosphate + H(+). In terms of biological role, nucleoside triphosphate pyrophosphatase that hydrolyzes dTTP and UTP. May have a dual role in cell division arrest and in preventing the incorporation of modified nucleotides into cellular nucleic acids. The polypeptide is dTTP/UTP pyrophosphatase (Thermosipho africanus (strain TCF52B)).